A 432-amino-acid polypeptide reads, in one-letter code: MSKLTPWWSRKSQQLTKIIPWGTENVNTFQNDVIAKRVLRTRKVKLNPTKQQKMMLMKFADAARYSYNAAVSAVNDKTHNPNKIELQNAFLSLKRRDGTYNKFFQKRRWLLGCPQPIRQQAIFEAANNFKSAFTNLKNKNIDHFKMTYKTKKHQRKCGFSLGIGTHLKHNDGVLIILPRNLGQVRYFGSVPFEGKPDAECRIQRDPYGDHWLLVPVYKTTKTQTTKPIVAIDPGVRTPFACFGSNGGSKTLGEDMNAKLTDIRTRVSLVDRRISKCQDVSLKRKMREHRRRLFRKHQRVRDAYHWEIIKDITNEYSGVLLPPFETQRVSRMLKNKTNCSMLGISHFTFRMRMKGKCEEKGLLYTEPTEEYTSKTCGVCGQINYLLGSKKTFECFCGNVCDRDIHAARNILLKWLSTEAGARVVETFLASRSS.

C375, C378, C393, and C395 together coordinate Zn(2+).

In the N-terminal section; belongs to the transposase 2 family. This sequence in the C-terminal section; belongs to the transposase 35 family.

In Chlorella (PBCV-1), this protein is Putative transposase A625R.